A 255-amino-acid chain; its full sequence is tRNA uridine(34) hydroxylase (255 aa).

One can recognise a Rhodanese domain in the interval 125–219; sequence AAPDTLLIDT…YLEGIPESES (95 aa). C179 acts as the Cysteine persulfide intermediate in catalysis.

The protein belongs to the TrhO family.

It catalyses the reaction uridine(34) in tRNA + AH2 + O2 = 5-hydroxyuridine(34) in tRNA + A + H2O. In terms of biological role, catalyzes oxygen-dependent 5-hydroxyuridine (ho5U) modification at position 34 in tRNAs. This chain is tRNA uridine(34) hydroxylase, found in Nitrobacter hamburgensis (strain DSM 10229 / NCIMB 13809 / X14).